The sequence spans 209 residues: Protein GrpE (209 aa).

This sequence belongs to the GrpE family. As to quaternary structure, homodimer.

It is found in the cytoplasm. In terms of biological role, participates actively in the response to hyperosmotic and heat shock by preventing the aggregation of stress-denatured proteins, in association with DnaK and GrpE. It is the nucleotide exchange factor for DnaK and may function as a thermosensor. Unfolded proteins bind initially to DnaJ; upon interaction with the DnaJ-bound protein, DnaK hydrolyzes its bound ATP, resulting in the formation of a stable complex. GrpE releases ADP from DnaK; ATP binding to DnaK triggers the release of the substrate protein, thus completing the reaction cycle. Several rounds of ATP-dependent interactions between DnaJ, DnaK and GrpE are required for fully efficient folding. The protein is Protein GrpE of Colwellia psychrerythraea (strain 34H / ATCC BAA-681) (Vibrio psychroerythus).